A 544-amino-acid polypeptide reads, in one-letter code: Serine/threonine-protein kinase PAK 3 (544 aa).

The tract at residues M1 to P73 is disordered. 2 positions are modified to phosphoserine: S2 and S4. Positions M18–S32 are enriched in polar residues. The residue at position 50 (S50) is a Phosphoserine; by autocatalysis. Positions K63–P73 are enriched in basic and acidic residues. Residues K65–T108 are GTPase-binding. Residues K65–Q135 form an autoregulatory region region. The CRIB domain maps to I70–G83. The linker stretch occupies residues F84–K267. S139 carries the phosphoserine; by autocatalysis modification. Disordered stretches follow at residues S156–H197 and P213–D248. A Phosphoserine modification is found at S171. Over residues S171–E186 the composition is skewed to acidic residues. Polar residues predominate over residues S224 to R235. The Protein kinase domain maps to Y268–L519. ATP is bound by residues I274–V282 and K297. The active-site Proton acceptor is the D387. T421 carries the post-translational modification Phosphothreonine; by autocatalysis.

This sequence belongs to the protein kinase superfamily. STE Ser/Thr protein kinase family. STE20 subfamily. In terms of assembly, interacts tightly with GTP-bound but not GDP-bound CDC42/p21 and RAC1. Shows highly specific binding to the SH3 domains of phospholipase C-gamma and of adapter protein NCK. Interacts with the C-terminal of APP. Interacts with ARHGEF6 and ARHGEF7. Interacts with GIT1 and GIT2. It depends on Mg(2+) as a cofactor. Post-translationally, autophosphorylated when activated by CDC42/p21. In terms of processing, neddylated. As to expression, detected at high levels in the brain and at low levels in the testis.

It localises to the cytoplasm. The catalysed reaction is L-seryl-[protein] + ATP = O-phospho-L-seryl-[protein] + ADP + H(+). It carries out the reaction L-threonyl-[protein] + ATP = O-phospho-L-threonyl-[protein] + ADP + H(+). With respect to regulation, activated by binding small G proteins. Binding of GTP-bound CDC42 or RAC1 to the autoregulatory region releases monomers from the autoinhibited dimer, enables phosphorylation of Thr-421 and allows the kinase domain to adopt an active structure. In terms of biological role, serine/threonine protein kinase that plays a role in a variety of different signaling pathways including cytoskeleton regulation, cell migration, or cell cycle regulation. Plays a role in dendrite spine morphogenesis as well as synapse formation and plasticity. Acts as a downstream effector of the small GTPases CDC42 and RAC1. Activation by the binding of active CDC42 and RAC1 results in a conformational change and a subsequent autophosphorylation on several serine and/or threonine residues. Phosphorylates MAPK4 and MAPK6 and activates the downstream target MAPKAPK5, a regulator of F-actin polymerization and cell migration. Additionally, phosphorylates TNNI3/troponin I to modulate calcium sensitivity and relaxation kinetics of thin myofilaments. May also be involved in early neuronal development. In hippocampal neurons, necessary for the formation of dendritic spines and excitatory synapses; this function is dependent on kinase activity and may be exerted by the regulation of actomyosin contractility through the phosphorylation of myosin II regulatory light chain (MLC). The polypeptide is Serine/threonine-protein kinase PAK 3 (Pak3) (Rattus norvegicus (Rat)).